The following is a 454-amino-acid chain: GTPase Der (454 aa).

2 EngA-type G domains span residues 3 to 167 (PVIT…GIAE) and 181 to 354 (MKIA…AAAM). GTP contacts are provided by residues 9–16 (GRPNVGKS), 56–60 (DTGGF), 119–122 (NKTE), 187–194 (GRPNVGKS), 234–238 (DTAGL), and 299–302 (NKWD). One can recognise a KH-like domain in the interval 355–439 (AKLPTPRLTR…PLRIQMNTAK (85 aa)).

The protein belongs to the TRAFAC class TrmE-Era-EngA-EngB-Septin-like GTPase superfamily. EngA (Der) GTPase family. Associates with the 50S ribosomal subunit.

In terms of biological role, GTPase that plays an essential role in the late steps of ribosome biogenesis. This chain is GTPase Der, found in Polynucleobacter asymbioticus (strain DSM 18221 / CIP 109841 / QLW-P1DMWA-1) (Polynucleobacter necessarius subsp. asymbioticus).